Consider the following 519-residue polypeptide: ATP synthase subunit alpha (519 aa).

174–181 (GDRQTGKT) is an ATP binding site.

The protein belongs to the ATPase alpha/beta chains family. F-type ATPases have 2 components, CF(1) - the catalytic core - and CF(0) - the membrane proton channel. CF(1) has five subunits: alpha(3), beta(3), gamma(1), delta(1), epsilon(1). CF(0) has three main subunits: a(1), b(2) and c(9-12). The alpha and beta chains form an alternating ring which encloses part of the gamma chain. CF(1) is attached to CF(0) by a central stalk formed by the gamma and epsilon chains, while a peripheral stalk is formed by the delta and b chains.

It localises to the cell inner membrane. It carries out the reaction ATP + H2O + 4 H(+)(in) = ADP + phosphate + 5 H(+)(out). Produces ATP from ADP in the presence of a proton gradient across the membrane. The alpha chain is a regulatory subunit. This chain is ATP synthase subunit alpha, found in Paracidovorax citrulli (strain AAC00-1) (Acidovorax citrulli).